A 564-amino-acid polypeptide reads, in one-letter code: Acetylcholine receptor subunit alpha-type deg-3 (564 aa).

A signal peptide spans 1–20 (MTLKIRTIIILFCVISVTTT). Over 21–268 (SQSLNATLKT…SLVIQRKPLY (248 aa)) the chain is Extracellular. N-linked (GlcNAc...) asparagine glycans are attached at residues Asn-25, Asn-37, Asn-125, and Asn-198. 2 disulfides stabilise this stretch: Cys-185-Cys-199 and Cys-248-Cys-249. The next 3 membrane-spanning stretches (helical) occupy residues 269 to 289 (YLVN…TGFF), 302 to 319 (INLG…MLMV), and 329 to 353 (FVPL…LTSV). Topologically, residues 354-526 (VLSVQGRRQY…WEFLATVLDR (173 aa)) are cytoplasmic. A helical membrane pass occupies residues 527-547 (FLLIVFVGAVVIVTAGLILVG).

The protein belongs to the ligand-gated ion channel (TC 1.A.9) family. Acetylcholine receptor (TC 1.A.9.1) subfamily. The functional receptor is a heteromer of deg-3 and des-2. Interacts with ric-3; which is required for proper receptor folding.

Its subcellular location is the postsynaptic cell membrane. It localises to the cell membrane. Its function is as follows. Subunit of the non-synaptic neuronal acetylcholine receptor, which may play a role in chemotaxis towards choline. After binding choline or acetylcholine, the AChR responds by an extensive change in conformation that affects all subunits and leads to opening of an ion-conducting channel across the plasma membrane. The chain is Acetylcholine receptor subunit alpha-type deg-3 (deg-3) from Caenorhabditis elegans.